Consider the following 1939-residue polypeptide: MSSDSEMAIFGEAAPFLRKSEKERIEAQNKPFDAKTSVFVVDPKESYVKAIVQSREGGKVTAKTEAGATVTVKEDQVFSMNPPKYDKIEDMAMMTHLHEPAVLYNLKERYAAWMIYTYSGLFCVTVNPYKWLPVYNPEVVTAYRGKKRQEAPPHIFSISDNAYQFMLTDRENQSILITGESGAGKTVNTKRVIQYFATIAVTGEKKKEEPASGKMQGTLEDQIISANPLLEAFGNAKTVRNDNSSRFGKFIRIHFGATGKLASADIETYLLEKSRVTFQLKAERSYHIFYQILSNKKPELIEMLLITTNPYDFAFVSQGEITVPSIDDQEELMATDSAVDILGFTADEKVAIYKLTGAVMHYGNMKFKQKQREEQAEPDGTEVADKAAYLTSLNSADLLKSLCYPRVKVGNEFVTKGQTVQQVYNAVGALAKAIYEKMFLWMVTRINQQLDTKQPRQYFIGVLDIAGFEIFDFNSLEQLCINFTNEKLQQFFNHHMFVLEQEEYKKEGIEWEFIDFGMDLAACIELIEKPMGIFSILEEECMFPKATDTSFKNKLYEQHLGKSNNFQKPKPAKGKPEAHFSLVHYAGTVDYNIAGWLDKNKDPLNETVVGLYQKSAMKTLAFLFSGAQTAEAEGGGGKKGGKKKGSSFQTVSALFRENLNKLMTNLRSTHPHFVRCIIPNETKTPGAMEHELVLHQLRCNGVLEGIRICRKGFPSRILYADFKQRYKVLNASAIPEGQFIDSKKASEKLLGSIEIDHTQYKFGHTKVFFKAGLLGTLEEMRDEKLAQLITRTQAICRGFLMRVEFRKMMERRESIFCIQYNIRAFMNVKHWPWMKLYFKIKPLLKSAETEKEMANMKEEFEKTKEELAKTEAKRKELEEKMVTLMQEKNDLQLQVQAEADALADAEERCDQLIKTKIQLEAKIKEVTERAEDEEEINAELTAKKRKLEDECSELKKDIDDLELTLAKVEKEKHATENKVKNLTEEMAGLDETIAKLTKEKKALQEAHQQTLDDLQMEEDKVNTLTKAKTKLEQQVDDLEGSLEQEKKLCMDLERAKRKLEGDLKLAQESTMDTENDKQQLNEKLKKKEFEMSNLQGKIEDEQALAIQLQKKIKELQARIEELEEEIEAERASRAKAEKQRSDLSRELEEISERLEEAGGATSAQIEMNKKREAEFQKMRRDLEESTLQHEATAAALRKKHADSVAELGEQIDSLQRVKQKLEKEKSELKMEINDLASNMETVSKAKANFEKMCRTLEDQLSEIKTKEEEQQRLINELSAQKARLHTESGEFSRQLDEKDAMVSQLSRGKQAFTQQIEELKRQLEEETKAKSTLAHALQSARHDCDLLREQYEEEQEAKAELQRGMSKANSEVAQWRTKYETDAIQRTEELEEAKKKLAQRLQDAEEHVEAVNSKCASLEKTKQRLQNEVEDLMIDVERSNAACIALDKKQRNFDKVLAEWKQKYEETQAELEASQKESRSLSTELFKVKNAYEESLDHLETLKRENKNLQQEISDLTEQIAEGGKHIHELEKVKKQLDHEKSELQTSLEEAEASLEHEEGKILRIQLELNQVKSEIDRKIAEKDEELDQLKRNHLRVVESMQSTLDAEIRSRNDALRIKKKMEGDLNEMEIQLNHANRQAAEALRNLRNTQGILKDTQLHLDDAIRGQDDLKEQLAMVERRANLMQAEVEELRASLERTERGRKMAEQELLDASERVQLLHTQNTSLINTKKKLETDISQIQGEMEDIVQEARNAEEKAKKAITDAAMMAEELKKEQDTSAHLERMKKNMEQTVKDLQLRLDEAEQLALKGGKKQIQKLEARVRELESEVESEQKHNVEAVKGLRKHERRVKELTYQTEEDRKNILRLQDLVDKLQTKVKAYKRQAEEAEEQSNVNLAKFRKLQHELEEAKERADIAESQVNKLRVKSREVHTKVISEE.

The 50-residue stretch at 33 to 82 (DAKTSVFVVDPKESYVKAIVQSREGGKVTAKTEAGATVTVKEDQVFSMNP) folds into the Myosin N-terminal SH3-like domain. A phosphothreonine mark is found at Thr-64 and Thr-69. The residue at position 79 (Ser-79) is a Phosphoserine. In terms of domain architecture, Myosin motor spans 86–782 (DKIEDMAMMT…LLGTLEEMRD (697 aa)). An N6,N6,N6-trimethyllysine modification is found at Lys-130. ATP is bound at residue 179–186 (GESGAGKT). Tyr-389 bears the Phosphotyrosine mark. Thr-391 carries the post-translational modification Phosphothreonine. Phosphoserine is present on Ser-392. Residue Thr-419 is modified to Phosphothreonine. Tyr-424 carries the post-translational modification Phosphotyrosine. Ser-625 bears the Phosphoserine mark. Positions 659 to 681 (LNKLMTNLRSTHPHFVRCIIPNE) are actin-binding. Position 757 is a pros-methylhistidine (His-757). Residues 761-775 (KFGHTKVFFKAGLLG) are actin-binding. Position 776 is a phosphothreonine (Thr-776). The IQ domain maps to 785 to 814 (LAQLITRTQAICRGFLMRVEFRKMMERRES). Residues 843–1939 (LLKSAETEKE…EVHTKVISEE (1097 aa)) adopt a coiled-coil conformation. Phosphoserine is present on residues Ser-1092, Ser-1162, and Ser-1237. Phosphothreonine is present on Thr-1241. The residue at position 1243 (Ser-1243) is a Phosphoserine. Thr-1255 carries the post-translational modification Phosphothreonine. Residue Ser-1261 is modified to Phosphoserine. At Thr-1265 the chain carries Phosphothreonine. At Ser-1278 the chain carries Phosphoserine. The residue at position 1286 (Thr-1286) is a Phosphothreonine. Ser-1288, Ser-1292, Ser-1303, Ser-1306, and Ser-1413 each carry phosphoserine. Tyr-1464 is subject to Phosphotyrosine. Thr-1467 is subject to Phosphothreonine. Ser-1474 is subject to Phosphoserine. Tyr-1492 bears the Phosphotyrosine mark. Position 1495 is a phosphoserine (Ser-1495). Residue Thr-1501 is modified to Phosphothreonine. Ser-1514 is subject to Phosphoserine. Thr-1517 carries the phosphothreonine modification. Phosphoserine occurs at positions 1542, 1547, 1554, 1574, 1600, 1603, 1714, and 1726. Phosphothreonine is present on residues Thr-1730 and Thr-1736. Ser-1739 carries the phosphoserine modification.

The protein belongs to the TRAFAC class myosin-kinesin ATPase superfamily. Myosin family. Muscle myosin is a hexameric protein that consists of 2 heavy chain subunits (MHC), 2 alkali light chain subunits (MLC) and 2 regulatory light chain subunits (MLC-2).

The protein resides in the cytoplasm. It localises to the myofibril. Its function is as follows. Muscle contraction. The polypeptide is Myosin-4 (MYH4) (Homo sapiens (Human)).